An 880-amino-acid polypeptide reads, in one-letter code: Lon protease (880 aa).

The interval 1-37 (MADYNDKNYLLHMSGPDSDTGPGIENEDPRAVENPGH) is disordered. Basic and acidic residues predominate over residues 27 to 37 (EDPRAVENPGH). The region spanning 57 to 251 (LPILPVRDVV…LVNTQLQREV (195 aa)) is the Lon N-terminal domain. An ATP-binding site is contributed by 404–411 (GPPGVGKT). Positions 640-821 (KLMPGMALGL…DELLPLVFEG (182 aa)) constitute a Lon proteolytic domain. Catalysis depends on residues S727 and K770. Positions 826 to 836 (GGVSGAGQAGD) are enriched in gly residues. Residues 826 to 880 (GGVSGAGQAGDKGGKSKAAAGKKDVVAARPAKPAAPARRRKDKTEDELPTAEAGA) are disordered. A compositionally biased stretch (low complexity) spans 852 to 861 (AARPAKPAAP).

Belongs to the peptidase S16 family. Homohexamer. Organized in a ring with a central cavity.

The protein resides in the cytoplasm. It catalyses the reaction Hydrolysis of proteins in presence of ATP.. Its function is as follows. ATP-dependent serine protease that mediates the selective degradation of mutant and abnormal proteins as well as certain short-lived regulatory proteins. Required for cellular homeostasis and for survival from DNA damage and developmental changes induced by stress. Degrades polypeptides processively to yield small peptide fragments that are 5 to 10 amino acids long. Binds to DNA in a double-stranded, site-specific manner. This chain is Lon protease, found in Desulfovibrio desulfuricans (strain ATCC 27774 / DSM 6949 / MB).